We begin with the raw amino-acid sequence, 231 residues long: Orotidine 5'-phosphate decarboxylase (231 aa).

Substrate is bound by residues Asp11, Lys33, 60–69, Thr120, Arg181, Gln190, Gly210, and Arg211; that span reads DLKFHDIPNT. Residue Lys62 is the Proton donor of the active site.

Belongs to the OMP decarboxylase family. Type 1 subfamily. Homodimer.

The catalysed reaction is orotidine 5'-phosphate + H(+) = UMP + CO2. Its pathway is pyrimidine metabolism; UMP biosynthesis via de novo pathway; UMP from orotate: step 2/2. In terms of biological role, catalyzes the decarboxylation of orotidine 5'-monophosphate (OMP) to uridine 5'-monophosphate (UMP). The chain is Orotidine 5'-phosphate decarboxylase from Vibrio atlanticus (strain LGP32) (Vibrio splendidus (strain Mel32)).